The following is a 354-amino-acid chain: Uroporphyrinogen decarboxylase (354 aa).

Residues 27-31 (RQAGR), aspartate 77, tyrosine 154, threonine 209, and histidine 327 contribute to the substrate site.

The protein belongs to the uroporphyrinogen decarboxylase family. As to quaternary structure, homodimer.

The protein resides in the cytoplasm. It catalyses the reaction uroporphyrinogen III + 4 H(+) = coproporphyrinogen III + 4 CO2. The protein operates within porphyrin-containing compound metabolism; protoporphyrin-IX biosynthesis; coproporphyrinogen-III from 5-aminolevulinate: step 4/4. Functionally, catalyzes the decarboxylation of four acetate groups of uroporphyrinogen-III to yield coproporphyrinogen-III. The protein is Uroporphyrinogen decarboxylase of Histophilus somni (strain 2336) (Haemophilus somnus).